A 249-amino-acid chain; its full sequence is uncharacterized protein (249 aa).

This sequence belongs to the chlamydial CPn_0206/CT203/TC_0475 family.

This is an uncharacterized protein from Chlamydia muridarum (strain MoPn / Nigg).